The following is a 445-amino-acid chain: Exodeoxyribonuclease 7 large subunit (445 aa).

This sequence belongs to the XseA family. Heterooligomer composed of large and small subunits.

It is found in the cytoplasm. The catalysed reaction is Exonucleolytic cleavage in either 5'- to 3'- or 3'- to 5'-direction to yield nucleoside 5'-phosphates.. In terms of biological role, bidirectionally degrades single-stranded DNA into large acid-insoluble oligonucleotides, which are then degraded further into small acid-soluble oligonucleotides. This chain is Exodeoxyribonuclease 7 large subunit, found in Shewanella oneidensis (strain ATCC 700550 / JCM 31522 / CIP 106686 / LMG 19005 / NCIMB 14063 / MR-1).